The primary structure comprises 55 residues: MYTRSSGLKTLKLDDLVQVVKLTRVDTPHPAQHVGIPTIRNVGLLEPLPVMQGRV.

This is an uncharacterized protein from Avena byzantina (Oat).